The chain runs to 237 residues: Pyridoxine 5'-phosphate synthase (237 aa).

Residues Asn-7 and Arg-18 each contribute to the 3-amino-2-oxopropyl phosphate site. His-43 acts as the Proton acceptor in catalysis. Positions 45 and 50 each coordinate 1-deoxy-D-xylulose 5-phosphate. Catalysis depends on Glu-70, which acts as the Proton acceptor. Thr-100 contacts 1-deoxy-D-xylulose 5-phosphate. The active-site Proton donor is His-190. 3-amino-2-oxopropyl phosphate is bound by residues Asp-191 and 213 to 214 (GH).

The protein belongs to the PNP synthase family. As to quaternary structure, homooctamer; tetramer of dimers.

It is found in the cytoplasm. The enzyme catalyses 3-amino-2-oxopropyl phosphate + 1-deoxy-D-xylulose 5-phosphate = pyridoxine 5'-phosphate + phosphate + 2 H2O + H(+). It functions in the pathway cofactor biosynthesis; pyridoxine 5'-phosphate biosynthesis; pyridoxine 5'-phosphate from D-erythrose 4-phosphate: step 5/5. Its function is as follows. Catalyzes the complicated ring closure reaction between the two acyclic compounds 1-deoxy-D-xylulose-5-phosphate (DXP) and 3-amino-2-oxopropyl phosphate (1-amino-acetone-3-phosphate or AAP) to form pyridoxine 5'-phosphate (PNP) and inorganic phosphate. The protein is Pyridoxine 5'-phosphate synthase of Bacteroides thetaiotaomicron (strain ATCC 29148 / DSM 2079 / JCM 5827 / CCUG 10774 / NCTC 10582 / VPI-5482 / E50).